We begin with the raw amino-acid sequence, 135 residues long: Large ribosomal subunit protein bL19 (135 aa).

Belongs to the bacterial ribosomal protein bL19 family.

Functionally, this protein is located at the 30S-50S ribosomal subunit interface and may play a role in the structure and function of the aminoacyl-tRNA binding site. The sequence is that of Large ribosomal subunit protein bL19 from Xanthomonas axonopodis pv. citri (strain 306).